Consider the following 226-residue polypeptide: Orotate phosphoribosyltransferase (226 aa).

Residue K29 coordinates 5-phospho-alpha-D-ribose 1-diphosphate. Position 37–38 (37–38) interacts with orotate; sequence FF. 5-phospho-alpha-D-ribose 1-diphosphate-binding positions include 75–76, R101, K102, K105, H107, and 126–134; these read YK and DDVISAGTS. The orotate site is built by S130 and R158.

This sequence belongs to the purine/pyrimidine phosphoribosyltransferase family. PyrE subfamily. As to quaternary structure, homodimer. Requires Mg(2+) as cofactor.

It catalyses the reaction orotidine 5'-phosphate + diphosphate = orotate + 5-phospho-alpha-D-ribose 1-diphosphate. The protein operates within pyrimidine metabolism; UMP biosynthesis via de novo pathway; UMP from orotate: step 1/2. In terms of biological role, catalyzes the transfer of a ribosyl phosphate group from 5-phosphoribose 1-diphosphate to orotate, leading to the formation of orotidine monophosphate (OMP). The protein is Orotate phosphoribosyltransferase of Ralstonia nicotianae (strain ATCC BAA-1114 / GMI1000) (Ralstonia solanacearum).